A 158-amino-acid chain; its full sequence is 2-C-methyl-D-erythritol 2,4-cyclodiphosphate synthase (158 aa).

Residues D9 and H11 each coordinate a divalent metal cation. 4-CDP-2-C-methyl-D-erythritol 2-phosphate contacts are provided by residues 9 to 11 (DVH) and 35 to 36 (HS). Residue H43 participates in a divalent metal cation binding. Residues 57–59 (DIG), 62–66 (FPDTD), 101–107 (AQRPKMA), 133–136 (TTTE), F140, and R143 contribute to the 4-CDP-2-C-methyl-D-erythritol 2-phosphate site.

Belongs to the IspF family. In terms of assembly, homotrimer. The cofactor is a divalent metal cation.

The catalysed reaction is 4-CDP-2-C-methyl-D-erythritol 2-phosphate = 2-C-methyl-D-erythritol 2,4-cyclic diphosphate + CMP. Its pathway is isoprenoid biosynthesis; isopentenyl diphosphate biosynthesis via DXP pathway; isopentenyl diphosphate from 1-deoxy-D-xylulose 5-phosphate: step 4/6. Functionally, involved in the biosynthesis of isopentenyl diphosphate (IPP) and dimethylallyl diphosphate (DMAPP), two major building blocks of isoprenoid compounds. Catalyzes the conversion of 4-diphosphocytidyl-2-C-methyl-D-erythritol 2-phosphate (CDP-ME2P) to 2-C-methyl-D-erythritol 2,4-cyclodiphosphate (ME-CPP) with a corresponding release of cytidine 5-monophosphate (CMP). The chain is 2-C-methyl-D-erythritol 2,4-cyclodiphosphate synthase from Lysinibacillus sphaericus (strain C3-41).